The chain runs to 148 residues: Lysozyme C (148 aa).

Positions 1-18 are cleaved as a signal peptide; sequence MKVLILLGLVLLSVMVQG. Positions 19–148 constitute a C-type lysozyme domain; that stretch reads KVFERCELAR…VSQYIQGCGV (130 aa). Intrachain disulfides connect Cys-24–Cys-146, Cys-48–Cys-134, Cys-83–Cys-99, and Cys-95–Cys-113. Active-site residues include Glu-53 and Asp-71.

The protein belongs to the glycosyl hydrolase 22 family. Monomer.

It is found in the secreted. The enzyme catalyses Hydrolysis of (1-&gt;4)-beta-linkages between N-acetylmuramic acid and N-acetyl-D-glucosamine residues in a peptidoglycan and between N-acetyl-D-glucosamine residues in chitodextrins.. In terms of biological role, lysozymes have primarily a bacteriolytic function; those in tissues and body fluids are associated with the monocyte-macrophage system and enhance the activity of immunoagents. In Saguinus oedipus (Cotton-top tamarin), this protein is Lysozyme C (LYZ).